A 336-amino-acid polypeptide reads, in one-letter code: Poly(A) RNA polymerase cid12 (336 aa).

Residues aspartate 77 and aspartate 79 each coordinate Mg(2+). One can recognise a PAP-associated domain in the interval alanine 209–asparagine 263. Serine 325 is subject to Phosphoserine. Threonine 327 is modified (phosphothreonine). Serine 329 bears the Phosphoserine mark.

Belongs to the DNA polymerase type-B-like family. As to quaternary structure, cid12, hrr1 and rdp1 interact forming the RNA-directed RNA polymerase complex (RDRC). The RDRC complex interacts with the RITS complex via interaction between ago1 and hrr1. Clr4 has a role in mediating this interaction. It depends on Mg(2+) as a cofactor. Mn(2+) is required as a cofactor.

The protein resides in the cytoplasm. The protein localises to the nucleus. The catalysed reaction is RNA(n) + ATP = RNA(n)-3'-adenine ribonucleotide + diphosphate. In terms of biological role, has a role in the RNA interference (RNAi) pathway which is important for heterochromatin formation and accurate chromosome segregation. A member of the RNA-directed RNA polymerase complex (RDRC) which is involved in the generation of small interfering RNAs (siRNAs) and mediate their association with the RNA-induced transcriptional silencing (RITS) complex. RITS acts as a priming complex for dsRNA synthesis at the site of non-coding centromeric RNA. The protein is Poly(A) RNA polymerase cid12 (cid12) of Schizosaccharomyces pombe (strain 972 / ATCC 24843) (Fission yeast).